The primary structure comprises 132 residues: Fatty acid-binding protein 12 (132 aa).

Residues Arg-107 and 127-129 (RTY) contribute to the a fatty acid site.

Belongs to the calycin superfamily. Fatty-acid binding protein (FABP) family. In terms of tissue distribution, highly expressed in adult retina and testis.

Its function is as follows. May play a role in lipid transport. This Mus musculus (Mouse) protein is Fatty acid-binding protein 12 (Fabp12).